The primary structure comprises 449 residues: Phosphoribosylamine--glycine ligase (449 aa).

An ATP-grasp domain is found at arginine 112–glutamate 325. Isoleucine 139 to threonine 202 contributes to the ATP binding site. Residues glutamine 283, glutamate 295, and asparagine 297 each coordinate Mg(2+). Mn(2+) is bound by residues glutamine 283, glutamate 295, and asparagine 297.

It belongs to the GARS family. It depends on Mg(2+) as a cofactor. Requires Mn(2+) as cofactor.

It catalyses the reaction 5-phospho-beta-D-ribosylamine + glycine + ATP = N(1)-(5-phospho-beta-D-ribosyl)glycinamide + ADP + phosphate + H(+). The protein operates within purine metabolism; IMP biosynthesis via de novo pathway; N(1)-(5-phospho-D-ribosyl)glycinamide from 5-phospho-alpha-D-ribose 1-diphosphate: step 2/2. The sequence is that of Phosphoribosylamine--glycine ligase from Methanopyrus kandleri (strain AV19 / DSM 6324 / JCM 9639 / NBRC 100938).